We begin with the raw amino-acid sequence, 416 residues long: 2-aminoadipate transaminase (416 aa).

Pyridoxal 5'-phosphate-binding positions include 102–103 and glutamine 233; that span reads GA. N6-(pyridoxal phosphate)lysine is present on lysine 259. Threonine 288 is a binding site for pyridoxal 5'-phosphate.

Belongs to the class-III pyridoxal-phosphate-dependent aminotransferase family. It depends on pyridoxal 5'-phosphate as a cofactor.

The enzyme catalyses L-2-aminoadipate + 2-oxoglutarate = 2-oxoadipate + L-glutamate. It catalyses the reaction 5-aminopentanoate + 2-oxoglutarate = 5-oxopentanoate + L-glutamate. It participates in amino-acid degradation. Its function is as follows. Catalyzes the conversion of 2-aminoadipate (2AA) to 2-oxoadipate (2OA). Is most active on L-2-aminoadipate (L-2AA) and shows only weak activity on the enantiomer, D-2-aminoadipate (D-2AA). Shows moderate activity on 5-aminovalerate (5AVA) and weak activity toward 4-aminobutyrate (GABA). Is involved in a D-lysine catabolic pathway. The polypeptide is 2-aminoadipate transaminase (Pseudomonas putida (strain ATCC 47054 / DSM 6125 / CFBP 8728 / NCIMB 11950 / KT2440)).